We begin with the raw amino-acid sequence, 154 residues long: 6,7-dimethyl-8-ribityllumazine synthase (154 aa).

5-amino-6-(D-ribitylamino)uracil contacts are provided by residues Phe-22, 56 to 58 (AFE), and 80 to 82 (AVI). 85–86 (AT) provides a ligand contact to (2S)-2-hydroxy-3-oxobutyl phosphate. Residue His-88 is the Proton donor of the active site. Phe-113 provides a ligand contact to 5-amino-6-(D-ribitylamino)uracil. Arg-127 contacts (2S)-2-hydroxy-3-oxobutyl phosphate.

This sequence belongs to the DMRL synthase family.

It catalyses the reaction (2S)-2-hydroxy-3-oxobutyl phosphate + 5-amino-6-(D-ribitylamino)uracil = 6,7-dimethyl-8-(1-D-ribityl)lumazine + phosphate + 2 H2O + H(+). The protein operates within cofactor biosynthesis; riboflavin biosynthesis; riboflavin from 2-hydroxy-3-oxobutyl phosphate and 5-amino-6-(D-ribitylamino)uracil: step 1/2. Catalyzes the formation of 6,7-dimethyl-8-ribityllumazine by condensation of 5-amino-6-(D-ribitylamino)uracil with 3,4-dihydroxy-2-butanone 4-phosphate. This is the penultimate step in the biosynthesis of riboflavin. In Desulfitobacterium hafniense (strain DSM 10664 / DCB-2), this protein is 6,7-dimethyl-8-ribityllumazine synthase.